The sequence spans 157 residues: UPF0225 protein PA1039 (157 aa).

Belongs to the UPF0225 family.

The chain is UPF0225 protein PA1039 from Pseudomonas aeruginosa (strain ATCC 15692 / DSM 22644 / CIP 104116 / JCM 14847 / LMG 12228 / 1C / PRS 101 / PAO1).